A 300-amino-acid chain; its full sequence is Ribosomal protein L11 methyltransferase (300 aa).

S-adenosyl-L-methionine is bound by residues Thr-152, Gly-173, Asp-195, and Asn-234.

It belongs to the methyltransferase superfamily. PrmA family.

Its subcellular location is the cytoplasm. It carries out the reaction L-lysyl-[protein] + 3 S-adenosyl-L-methionine = N(6),N(6),N(6)-trimethyl-L-lysyl-[protein] + 3 S-adenosyl-L-homocysteine + 3 H(+). Methylates ribosomal protein L11. The sequence is that of Ribosomal protein L11 methyltransferase from Paraburkholderia xenovorans (strain LB400).